The chain runs to 315 residues: Aspartate carbamoyltransferase catalytic subunit (315 aa).

The carbamoyl phosphate site is built by R65 and T66. Position 93 (K93) interacts with L-aspartate. The carbamoyl phosphate site is built by R115, H145, and Q148. Positions 179 and 234 each coordinate L-aspartate. Residues G275 and P276 each coordinate carbamoyl phosphate.

The protein belongs to the aspartate/ornithine carbamoyltransferase superfamily. ATCase family. As to quaternary structure, heterododecamer (2C3:3R2) of six catalytic PyrB chains organized as two trimers (C3), and six regulatory PyrI chains organized as three dimers (R2).

The catalysed reaction is carbamoyl phosphate + L-aspartate = N-carbamoyl-L-aspartate + phosphate + H(+). Its pathway is pyrimidine metabolism; UMP biosynthesis via de novo pathway; (S)-dihydroorotate from bicarbonate: step 2/3. In terms of biological role, catalyzes the condensation of carbamoyl phosphate and aspartate to form carbamoyl aspartate and inorganic phosphate, the committed step in the de novo pyrimidine nucleotide biosynthesis pathway. The protein is Aspartate carbamoyltransferase catalytic subunit of Xanthomonas oryzae pv. oryzae (strain MAFF 311018).